A 263-amino-acid chain; its full sequence is tRNA pseudouridine synthase A (263 aa).

Aspartate 51 functions as the Nucleophile in the catalytic mechanism. Tyrosine 109 is a binding site for substrate.

The protein belongs to the tRNA pseudouridine synthase TruA family. Homodimer.

The catalysed reaction is uridine(38/39/40) in tRNA = pseudouridine(38/39/40) in tRNA. In terms of biological role, formation of pseudouridine at positions 38, 39 and 40 in the anticodon stem and loop of transfer RNAs. The polypeptide is tRNA pseudouridine synthase A (Pseudoalteromonas atlantica (strain T6c / ATCC BAA-1087)).